We begin with the raw amino-acid sequence, 515 residues long: GMP synthase [glutamine-hydrolyzing] (515 aa).

One can recognise a Glutamine amidotransferase type-1 domain in the interval 10–200; that stretch reads TIIVLDFGSQ…VFGVCGCSEG (191 aa). Cysteine 87 acts as the Nucleophile in catalysis. Active-site residues include histidine 174 and glutamate 176. The GMPS ATP-PPase domain occupies 201 to 390; the sequence is WNMENFIEVE…LGIPDEIVWR (190 aa). 228-234 lines the ATP pocket; that stretch reads SGGVDSS.

Homodimer.

The enzyme catalyses XMP + L-glutamine + ATP + H2O = GMP + L-glutamate + AMP + diphosphate + 2 H(+). It functions in the pathway purine metabolism; GMP biosynthesis; GMP from XMP (L-Gln route): step 1/1. Functionally, catalyzes the synthesis of GMP from XMP. In Bacillus cereus (strain ATCC 14579 / DSM 31 / CCUG 7414 / JCM 2152 / NBRC 15305 / NCIMB 9373 / NCTC 2599 / NRRL B-3711), this protein is GMP synthase [glutamine-hydrolyzing].